The following is a 214-amino-acid chain: Glutathione S-transferase F12 (214 aa).

One can recognise a GST N-terminal domain in the interval 2-82 (VVKLYGQVTA…YYATKFADQG (81 aa)). Residues 11 to 12 (AA), 40 to 41 (QK), 53 to 54 (QV), and 66 to 67 (ES) contribute to the glutathione site. The GST C-terminal domain occupies 89–214 (SLEHRAIVDQ…WKKLMVLAGH (126 aa)).

It belongs to the GST superfamily. Phi family.

It is found in the cytoplasm. The protein resides in the cytosol. It catalyses the reaction RX + glutathione = an S-substituted glutathione + a halide anion + H(+). Functionally, involved in the transport and/or accumulation of both anthocyanins and proanthocyanidins (PA)s in the vacuole. Functions in the cytosol to maintain the regular accumulation in the vacuole of PA precursors, such as epicatechin and glycosylated epicatechin. This Arabidopsis thaliana (Mouse-ear cress) protein is Glutathione S-transferase F12.